The primary structure comprises 412 residues: Transcription factor IIIA (412 aa).

The segment at 20-43 adopts a C2H2-type 1; degenerate zinc-finger fold; the sequence is YLCQYCGISRSKNYLITKHIQSHH. 3 C2H2-type zinc fingers span residues 66 to 88, 94 to 118, and 123 to 148; these read HTCQ…MQSH, FTCY…LLTH, and FKCP…KKYH. Residues 144–207 are disordered; sequence VKKYHSNDNR…NGNGDSQPAE (64 aa). The segment covering 148-188 has biased composition (basic and acidic residues); sequence HSNDNRDKDNTGLGDGDKDNTCKGDDDKEKSGSGGCEKENE. Lys185 participates in a covalent cross-link: Glycyl lysine isopeptide (Lys-Gly) (interchain with G-Cter in ubiquitin). Residues 215–239 form a C2H2-type 5 zinc finger; it reads VVCKEIGCGKAFKYPSQLQKHQDSH. Residues 247–272 form a C2H2-type 6; degenerate zinc finger; sequence AFCSEPGCMKYFTNEECLKSHIRSCH. A C2H2-type 7; degenerate zinc finger spans residues 275–296; that stretch reads INCEICGSKHLKKNIKRHLRTH. A C2H2-type 8 zinc finger spans residues 305 to 330; that stretch reads IKCEVEGCSSTFSKASNLQKHMKAVH. A C2H2-type 9; degenerate zinc finger spans residues 336 to 362; the sequence is FVCGFPGCGMRFAYKHVRNKHENSGYH. The Nuclear localization signal signature appears at 384–391; that stretch reads LKRKQVTA.

In terms of processing, protein product TFIIIA (44 kDa) is proteolytically cleaved into TFIIIA-C (34 kDa). As to expression, expressed in seedlings, flowers, siliques and seeds.

It localises to the nucleus. Its subcellular location is the nucleolus. Functionally, essential protein. Isoform 1 is a transcription activator the binds both 5S rDNA and 5S rRNA and stimulates the transcription of 5S rRNA gene. Isoform 1 regulates 5S rRNA levels during development. The chain is Transcription factor IIIA from Arabidopsis thaliana (Mouse-ear cress).